The sequence spans 137 residues: MRHRIKGRRLNVTSSHRQSMLANMAVALVMHEQIKTTLPKAKELRPYIEAIITKAKKADLTVRRSVLSKIKDKKAVEKIINILGVRYKDRPGGYTRIVKSGFRYGDLAPIAYIEFVDRDINAKGKKMYQDASEEIKN.

The protein belongs to the bacterial ribosomal protein bL17 family. In terms of assembly, part of the 50S ribosomal subunit. Contacts protein L32.

In Rickettsia typhi (strain ATCC VR-144 / Wilmington), this protein is Large ribosomal subunit protein bL17.